The sequence spans 520 residues: Keratin, type II cytoskeletal 72 (520 aa).

Residues Met1 to Gln133 are head. A coil 1A region spans residues Glu134 to Leu169. The 314-residue stretch at Glu134–Met447 folds into the IF rod domain. The linker 1 stretch occupies residues Gln170–Tyr188. The coil 1B stretch occupies residues Ile189–Met280. The interval Gln281–Ile304 is linker 12. The segment at Leu305–Glu443 is coil 2. The segment at Glu444–Arg520 is tail. Positions Lys494–Arg520 are disordered. Over residues Lys507–Arg520 the composition is skewed to low complexity.

The protein belongs to the intermediate filament family. In terms of assembly, heterotetramer of two type I and two type II keratins.

Its function is as follows. Has a role in hair formation. Specific component of keratin intermediate filaments in the inner root sheath (IRS) of the hair follicle. The chain is Keratin, type II cytoskeletal 72 (Krt72) from Mus musculus (Mouse).